The primary structure comprises 123 residues: Protein Wnt-3b (123 aa).

Ser1 carries O-palmitoleoyl serine; by PORCN lipidation. Cys89 and Cys104 form a disulfide bridge. The N-linked (GlcNAc...) asparagine glycan is linked to Asn90.

The protein belongs to the Wnt family. Palmitoleoylation is required for efficient binding to frizzled receptors. Depalmitoleoylation leads to Wnt signaling pathway inhibition.

The protein localises to the secreted. It localises to the extracellular space. Its subcellular location is the extracellular matrix. Ligand for members of the frizzled family of seven transmembrane receptors. Probable developmental protein. May be a signaling molecule which affects the development of discrete regions of tissues. Is likely to signal over only few cell diameters. The chain is Protein Wnt-3b (WNT-3B) from Alopias vulpinus (Common thresher shark).